Reading from the N-terminus, the 671-residue chain is DNA ligase (671 aa).

NAD(+) contacts are provided by residues 32 to 36 (DAEYD), 81 to 82 (SL), and E113. K115 serves as the catalytic N6-AMP-lysine intermediate. Residues R136, E173, K290, and K314 each coordinate NAD(+). C408, C411, C426, and C432 together coordinate Zn(2+). In terms of domain architecture, BRCT spans 593-671 (EIDSPFAGKT…EAEMIRLLGA (79 aa)).

The protein belongs to the NAD-dependent DNA ligase family. LigA subfamily. Mg(2+) is required as a cofactor. It depends on Mn(2+) as a cofactor.

The catalysed reaction is NAD(+) + (deoxyribonucleotide)n-3'-hydroxyl + 5'-phospho-(deoxyribonucleotide)m = (deoxyribonucleotide)n+m + AMP + beta-nicotinamide D-nucleotide.. Functionally, DNA ligase that catalyzes the formation of phosphodiester linkages between 5'-phosphoryl and 3'-hydroxyl groups in double-stranded DNA using NAD as a coenzyme and as the energy source for the reaction. It is essential for DNA replication and repair of damaged DNA. The chain is DNA ligase from Salmonella gallinarum (strain 287/91 / NCTC 13346).